Consider the following 654-residue polypeptide: MRYLRPLNSCLRGIRSGSSFQPLAQSLNTRIRYSSSFAKTDMESINTTERLAGLRELMKKNKVDIYIVPSEDSHSSEYIAACDARREFISGFSGSAGCAVVTLEKAALATDGRYFNQASRQLDNNWLLLKQGLQDVPTWQEWAAEQSENGKVVGVDPTIMSASDARKLTEKIKKRGGNDLVAVEENLVDLVWGDSRPSRPKEPVKVLARKFAGKDVKTKLEDLRKELLKKKSSGLIVSMLDEIAWLFNLRGNDIPYNPVFFSYASVTSSSATLYVDSSKLSDECTAHLNENGVSVRDYSKIFGDAEVLSQSLDAEDTKVKKFLVSSRASWALKRALGGDAKVDEVRSPIGDAKSVKNETELEGMRACHVRDGAALIEYFAWLEHQLVVEKVKMDEVTAADRLEQLRSKQKNFVGLSFDTISSTGPNAAVIHYKPEPGNCSIIDPNAVYLCDSGAQYFDGTTDTTRTLHFGEPTEMEKKAYTLVLKGNIALDVAIFPKGTSGFALDVLARQFLWEEGLDYRHGTGHGVGSFLNVHEGPIGIGTRIQYSEVPLAPGNVISNEPGYYEDGSFGIRIENIIMVKEIETKHQFGEKPYLGFEHVTMVPYCRKLIDETLLTRKEKHWLNEYHADIYSKTKDFFKGDELTMSWLEREIEPL.

The Mn(2+) site is built by Asp-451, Asp-462, Glu-560, and Glu-574.

Belongs to the peptidase M24B family. It depends on Mn(2+) as a cofactor.

The enzyme catalyses Release of any N-terminal amino acid, including proline, that is linked to proline, even from a dipeptide or tripeptide.. Functionally, catalyzes the removal of a penultimate prolyl residue from the N-termini of peptides. This chain is Probable Xaa-Pro aminopeptidase P (ampp), found in Botryotinia fuckeliana (strain B05.10) (Noble rot fungus).